The chain runs to 409 residues: Argininosuccinate synthase (409 aa).

Residues 15-23 (AYSGGLDTS) and alanine 42 contribute to the ATP site. The L-citrulline site is built by tyrosine 93 and serine 98. Residue glycine 123 participates in ATP binding. Threonine 125, asparagine 129, and aspartate 130 together coordinate L-aspartate. Asparagine 129 provides a ligand contact to L-citrulline. L-citrulline is bound by residues arginine 133, serine 182, serine 191, glutamate 267, and tyrosine 279.

Belongs to the argininosuccinate synthase family. Type 1 subfamily. As to quaternary structure, homotetramer.

Its subcellular location is the cytoplasm. It catalyses the reaction L-citrulline + L-aspartate + ATP = 2-(N(omega)-L-arginino)succinate + AMP + diphosphate + H(+). It functions in the pathway amino-acid biosynthesis; L-arginine biosynthesis; L-arginine from L-ornithine and carbamoyl phosphate: step 2/3. This chain is Argininosuccinate synthase, found in Desulfitobacterium hafniense (strain Y51).